The following is an 851-amino-acid chain: Glycogen phosphorylase, liver form (851 aa).

Ala-2 is modified (N-acetylalanine). A Phosphoserine; by PHK; in form phosphorylase a modification is found at Ser-15. Residues 43 to 45 (DRN), Tyr-76, and Arg-310 each bind AMP. Lys-364 is subject to N6-succinyllysine. Lys-470 carries the N6-acetyllysine modification. Phosphoserine is present on residues Ser-524, Ser-561, and Ser-639. Lys-681 is modified (N6-(pyridoxal phosphate)lysine). Lys-796 carries the post-translational modification N6-acetyllysine.

It belongs to the glycogen phosphorylase family. In terms of assembly, homodimer; enzymatically active. Interacts with PPP1R3B; recruits the phosphatase PP1 which dephosphorylates and inactivates PYGL/glycogen phosphorylase. The cofactor is pyridoxal 5'-phosphate. Acetylation, which is up-regulated by glucose and insulin and down-regulated by glucagon, inhibits the glycogen phosphorylase activity by promoting PPP1R3B-mediated recruitment of phosphatase PP1 and Ser-15 dephosphorylation. In terms of processing, phosphorylation at Ser-15 converts inactive phosphorylase b into active phosphorylase a. Dephosphorylation of Ser-15 by phosphatase PP1 inactivates the enzyme.

The protein resides in the cytoplasm. The protein localises to the cytosol. It catalyses the reaction [(1-&gt;4)-alpha-D-glucosyl](n) + phosphate = [(1-&gt;4)-alpha-D-glucosyl](n-1) + alpha-D-glucose 1-phosphate. Allosterically regulated through the non-covalent binding of metabolites, being activated by AMP and inhibited by ATP, ADP, and glucose-6-phosphate. The activity is also controlled by post-translational modifications including phosphorylation and acetylation. Functionally, allosteric enzyme that catalyzes the rate-limiting step in glycogen catabolism, the phosphorolytic cleavage of glycogen to produce glucose-1-phosphate, and plays a central role in maintaining cellular and organismal glucose homeostasis. The polypeptide is Glycogen phosphorylase, liver form (Bos taurus (Bovine)).